The sequence spans 1393 residues: DNA-directed RNA polymerase subunit beta' (1393 aa).

Positions 72, 74, 87, and 90 each coordinate Zn(2+). Mg(2+)-binding residues include Asp463, Asp465, and Asp467. Cys812, Cys887, Cys894, and Cys897 together coordinate Zn(2+).

This sequence belongs to the RNA polymerase beta' chain family. In terms of assembly, the RNAP catalytic core consists of 2 alpha, 1 beta, 1 beta' and 1 omega subunit. When a sigma factor is associated with the core the holoenzyme is formed, which can initiate transcription. Mg(2+) serves as cofactor. Zn(2+) is required as a cofactor.

It catalyses the reaction RNA(n) + a ribonucleoside 5'-triphosphate = RNA(n+1) + diphosphate. In terms of biological role, DNA-dependent RNA polymerase catalyzes the transcription of DNA into RNA using the four ribonucleoside triphosphates as substrates. This Chlamydia pneumoniae (Chlamydophila pneumoniae) protein is DNA-directed RNA polymerase subunit beta'.